A 644-amino-acid polypeptide reads, in one-letter code: Chaperone protein DnaK (644 aa).

T199 carries the phosphothreonine; by autocatalysis modification. The interval 589–644 (QALAEASHKLAEKMYSQGQGPQAGPGEEPSGQSGGTEKPVEGEVVDAEFEEVKNKK) is disordered. Over residues 604-619 (SQGQGPQAGPGEEPSG) the composition is skewed to low complexity.

This sequence belongs to the heat shock protein 70 family.

Acts as a chaperone. The sequence is that of Chaperone protein DnaK from Nitrosospira multiformis (strain ATCC 25196 / NCIMB 11849 / C 71).